An 84-amino-acid polypeptide reads, in one-letter code: Delta-conotoxin-like Bt6.4 (84 aa).

Residues 1–22 (MKLTCMVIVAVLFLTAWTSVMA) form the signal peptide. A propeptide spanning residues 23-57 (DGSINRPDIAEGWQKFFSKARDEMKNRAASELNKR) is cleaved from the precursor. Cystine bridges form between Cys58–Cys74, Cys65–Cys78, and Cys73–Cys82.

This sequence belongs to the conotoxin O1 superfamily. In terms of tissue distribution, expressed by the venom duct.

Its subcellular location is the secreted. This toxin activates voltage-gated sodium channels. It shifts the voltage-dependence of activation to more hyperpolarized potentials but has only little effect on channel inactivation. It is active on Nav1.3/SCN3A (EC(50)=3.98 nM), Nav1.4/SCN4A (EC(50)=4.99 nM), Nav1.6/SCN8A (EC(50)=1.27 nM) and Nav1.7/SCN9A (EC(50)=2.42 nM) voltage-gated sodium channels. In vivo, it induces nocifensive or pain-like behaviors in mice when injected intraplantarly. The chain is Delta-conotoxin-like Bt6.4 from Conus betulinus (Beech cone).